Here is a 631-residue protein sequence, read N- to C-terminus: Phosphomethylpyrimidine synthase (631 aa).

Substrate is bound by residues Asn239, Met268, Tyr297, His333, 353–355, 394–397, and Glu433; these read SRG and DGLR. His437 provides a ligand contact to Zn(2+). A substrate-binding site is contributed by Tyr460. Residue His501 coordinates Zn(2+). Residues Cys581, Cys584, and Cys589 each contribute to the [4Fe-4S] cluster site.

The protein belongs to the ThiC family. As to quaternary structure, homodimer. It depends on [4Fe-4S] cluster as a cofactor.

It catalyses the reaction 5-amino-1-(5-phospho-beta-D-ribosyl)imidazole + S-adenosyl-L-methionine = 4-amino-2-methyl-5-(phosphooxymethyl)pyrimidine + CO + 5'-deoxyadenosine + formate + L-methionine + 3 H(+). It participates in cofactor biosynthesis; thiamine diphosphate biosynthesis. Functionally, catalyzes the synthesis of the hydroxymethylpyrimidine phosphate (HMP-P) moiety of thiamine from aminoimidazole ribotide (AIR) in a radical S-adenosyl-L-methionine (SAM)-dependent reaction. The chain is Phosphomethylpyrimidine synthase from Klebsiella pneumoniae (strain 342).